The chain runs to 403 residues: MQHHHHSSYGGGGGGYPGQAYRQQQPYYGQPSPQPYAQPPPPNYQRPSGYGPPPSGGHMYQQGPPAPYQQHNSYQGGHGRPAPPPTDPVAFGHGAPQGYNFQYSRCTGKRKALLIGINYFGQKGQLRGCINDVKNMSTYLNQNFGYAREDMVLLTDDQQNPMSQPTKANILRAMHWLVKDAQPNDSLFFHYSGHGGQTPDLDGDEDDGYDEVIYPVDFRVAGHIVDDEMHRIMVNPLKPGTRLTAIFDSCHSGSALDLPYIYSTQGILKEPNLAKEAGQGLLGVVSAYARGDMGSMVSTAVGFLKKAAKGDEAYERTKQTKTSPADVIMWSGSKDSQTSSDAQIQGQATGAMSWAFISALRKNPQQSYVQLLNSIRDELATKYSQKPQLSCSHPLDVNLLYVM.

The disordered stretch occupies residues 1–93; sequence MQHHHHSSYG…PPTDPVAFGH (93 aa). A compositionally biased stretch (low complexity) spans 18-31; it reads GQAYRQQQPYYGQP. Pro residues predominate over residues 32-55; sequence SPQPYAQPPPPNYQRPSGYGPPPS. Catalysis depends on residues His194 and Cys250.

It belongs to the peptidase C14B family.

In terms of biological role, involved in cell death (apoptosis). The chain is Metacaspase-1A (casA) from Aspergillus terreus (strain NIH 2624 / FGSC A1156).